The primary structure comprises 61 residues: Small ribosomal subunit protein uS14B (61 aa).

Zn(2+) contacts are provided by Cys24, Cys27, Cys40, and Cys43.

This sequence belongs to the universal ribosomal protein uS14 family. Zinc-binding uS14 subfamily. In terms of assembly, part of the 30S ribosomal subunit. Contacts proteins S3 and S10. Requires Zn(2+) as cofactor.

Binds 16S rRNA, required for the assembly of 30S particles and may also be responsible for determining the conformation of the 16S rRNA at the A site. The protein is Small ribosomal subunit protein uS14B of Streptococcus agalactiae serotype Ia (strain ATCC 27591 / A909 / CDC SS700).